Reading from the N-terminus, the 144-residue chain is Transcriptional regulator SlyA (144 aa).

Residues 2 to 135 (ESPLGSDLAR…LIKLIAKLEH (134 aa)) form the HTH marR-type domain. Positions 49–72 (QIQLAKAIGIEQPSLVRTLDQLEE) form a DNA-binding region, H-T-H motif.

Belongs to the SlyA family. As to quaternary structure, homodimer.

Functionally, transcription regulator that can specifically activate or repress expression of target genes. This is Transcriptional regulator SlyA from Escherichia coli O127:H6 (strain E2348/69 / EPEC).